A 411-amino-acid polypeptide reads, in one-letter code: Tyrosine--tRNA ligase (411 aa).

Tyrosine 34 contributes to the L-tyrosine binding site. Positions 39-48 (CTATSLHIGS) match the 'HIGH' region motif. L-tyrosine is bound by residues tyrosine 171 and glutamine 175. The short motif at 231–235 (KMGKT) is the 'KMSKS' region element. Residue lysine 234 coordinates ATP. The 67-residue stretch at 345–411 (ISAYKLFYNV…GKKRHILVKV (67 aa)) folds into the S4 RNA-binding domain.

The protein belongs to the class-I aminoacyl-tRNA synthetase family. TyrS type 1 subfamily. Homodimer.

The protein localises to the cytoplasm. The catalysed reaction is tRNA(Tyr) + L-tyrosine + ATP = L-tyrosyl-tRNA(Tyr) + AMP + diphosphate + H(+). Its function is as follows. Catalyzes the attachment of tyrosine to tRNA(Tyr) in a two-step reaction: tyrosine is first activated by ATP to form Tyr-AMP and then transferred to the acceptor end of tRNA(Tyr). The polypeptide is Tyrosine--tRNA ligase (Rickettsia typhi (strain ATCC VR-144 / Wilmington)).